Reading from the N-terminus, the 514-residue chain is Cholesterol side-chain cleavage enzyme, mitochondrial (514 aa).

A mitochondrion-targeting transit peptide spans 1 to 39; that stretch reads SFRLSLSASTYAQRGSFTTPEHDFTLFPHRNHSVTSESR. Cysteine 461 is a heme binding site.

The protein belongs to the cytochrome P450 family. Heme is required as a cofactor.

It localises to the mitochondrion inner membrane. It catalyses the reaction 6 reduced [adrenodoxin] + cholesterol + 3 O2 + 6 H(+) = 4-methylpentanal + pregnenolone + 6 oxidized [adrenodoxin] + 4 H2O. It participates in lipid metabolism; C21-steroid hormone metabolism. Its function is as follows. Catalyzes the side-chain cleavage reaction of cholesterol to pregnenolone, the precursor of most steroid hormones. This is Cholesterol side-chain cleavage enzyme, mitochondrial (CYP11A1) from Hypanus americanus (Southern stingray).